Here is a 609-residue protein sequence, read N- to C-terminus: COP9 signalosome complex subunit 5 (609 aa).

The MPN domain occupies 75–215 (CYISSLALMK…IGAFRTYPEG (141 aa)). Residues His-161, His-163, and Asp-174 each contribute to the Zn(2+) site. The short motif at 161–174 (HSHPGYGCWLSGID) is the JAMM motif element. 2 disordered regions span residues 210 to 248 (RTYP…LPKS) and 381 to 456 (TTTK…EVDS). The span at 214 to 224 (EGSQQQPSMTN) shows a compositional bias: polar residues. 3 stretches are compositionally biased toward acidic residues: residues 392–404 (TDID…DESD), 420–431 (SDDDDEEEEGEG), and 445–456 (EVEEGPTDEVDS).

Belongs to the peptidase M67A family. CSN5 subfamily. Component of the COP9 signalosome (CSN) complex.

Its subcellular location is the cytoplasm. The protein resides in the nucleus. In terms of biological role, catalytic Component of the COP9 signalosome (CSN) complex that acts as an regulator of the ubiquitin (Ubl) conjugation pathway by mediating the deneddylation of the cullin subunit of SCF-type E3 ubiquitin-protein ligase complexes. This chain is COP9 signalosome complex subunit 5 (JAB1), found in Candida albicans (strain SC5314 / ATCC MYA-2876) (Yeast).